Consider the following 843-residue polypeptide: RNA-binding protein 25 (843 aa).

Residues 1 to 30 form a disordered region; sequence MSFPPHLNRPPMGIPALPPGIPPPQFPGFP. Positions 12-30 are enriched in pro residues; that stretch reads MGIPALPPGIPPPQFPGFP. Residues 87 to 164 form the RRM domain; sequence TTVFVGNISE…KKLLVKVDAK (78 aa). At K135 the chain carries N6-acetyllysine. 2 disordered regions span residues 171 to 202 and 219 to 243; these read EWKAKKKASNGNARPETVTNDDEEALDEETKR and SSELNAPSQESDSHPRKKKKEKKED. S226 and S229 each carry phosphoserine. Glycyl lysine isopeptide (Lys-Gly) (interchain with G-Cter in SUMO2) cross-links involve residues K261, K273, and K430. Basic and acidic residues-rich tracts occupy residues 280–433 and 521–573; these read EISK…KRDR and RLRD…ERRR. 2 disordered regions span residues 280–442 and 498–688; these read EISK…DAYE and EFLE…KRKK. Residues 285-644 are necessary for nuclear speckle localization; the sequence is RDTHKKLEEE…PNTPGDESPC (360 aa). Residue K578 forms a Glycyl lysine isopeptide (Lys-Gly) (interchain with G-Cter in SUMO2) linkage. At S583 the chain carries Phosphoserine. The segment covering 590 to 599 has biased composition (basic and acidic residues); the sequence is KQEKEEKREE. The span at 621 to 630 shows a compositional bias: low complexity; sequence SSAPSVSSAS. A Glycyl lysine isopeptide (Lys-Gly) (interchain with G-Cter in SUMO2) cross-link involves residue K671. The span at 674-683 shows a compositional bias: polar residues; sequence ASNSPGQPNS. 2 positions are modified to phosphoserine: S677 and S683. Residues K688 and K697 each participate in a glycyl lysine isopeptide (Lys-Gly) (interchain with G-Cter in SUMO2) cross-link. At S703 the chain carries Phosphoserine. Residue K722 forms a Glycyl lysine isopeptide (Lys-Gly) (interchain with G-Cter in SUMO2) linkage. Positions 750–843 constitute a PWI domain; the sequence is PELFAYPLDW…TEAKKIGLVK (94 aa).

As to quaternary structure, interacts with LUC7L3 and SRRM1. Specifically associates with functional splicing complexes, including Sm proteins and U1, U2, U4, U5 and U6 snRNAs. Associates with exon junction complex (EJC) proteins, including APEX1, DDX39B, NCBP1, RBM8A and RNPS1. Interaction with NCBP1 is RNA-dependent. In terms of processing, sumoylated.

The protein localises to the nucleus speckle. It is found in the cytoplasm. Functionally, RNA-binding protein that acts as a regulator of alternative pre-mRNA splicing. Involved in apoptotic cell death through the regulation of the apoptotic factor BCL2L1 isoform expression. Modulates the ratio of proapoptotic BCL2L1 isoform S to antiapoptotic BCL2L1 isoform L mRNA expression. When overexpressed, stimulates proapoptotic BCL2L1 isoform S 5'-splice site (5'-ss) selection, whereas its depletion caused the accumulation of antiapoptotic BCL2L1 isoform L. Promotes BCL2L1 isoform S 5'-ss usage through the 5'-CGGGCA-3' RNA sequence. Its association with LUC7L3 promotes U1 snRNP binding to a weak 5' ss in a 5'-CGGGCA-3'-dependent manner. Binds to the exonic splicing enhancer 5'-CGGGCA-3' RNA sequence located within exon 2 of the BCL2L1 pre-mRNA. Also involved in the generation of an abnormal and truncated splice form of SCN5A in heart failure. In Homo sapiens (Human), this protein is RNA-binding protein 25 (RBM25).